The primary structure comprises 214 residues: Ras-related protein RABA5c (214 aa).

19–26 (GDSAVGKS) serves as a coordination point for GTP. The Effector region motif lies at 41 to 49 (SKATIGVEF). Residues 67-71 (DTAGQ), 125-128 (NKCD), and 155-156 (SA) each bind GTP. S-geranylgeranyl cysteine attachment occurs at residues Cys211 and Cys212.

The protein belongs to the small GTPase superfamily. Rab family. Interacts (via C-terminus) with GDI1. Interacts with PUX8/SAY1. As to expression, expressed in roots and actively dividing cells.

Its subcellular location is the golgi apparatus membrane. The protein localises to the golgi apparatus. It localises to the trans-Golgi network membrane. The protein resides in the cell membrane. In terms of biological role, intracellular vesicle trafficking and protein transport. Binds GTP and GDP and possesses intrinsic GTPase activity. This chain is Ras-related protein RABA5c (RABA5C), found in Arabidopsis thaliana (Mouse-ear cress).